The primary structure comprises 222 residues: ATP-dependent dethiobiotin synthetase BioD (222 aa).

12–17 (DVGKTF) contacts ATP. Thr-16 provides a ligand contact to Mg(2+). Lys-37 is an active-site residue. Residue Ser-41 participates in substrate binding. ATP is bound by residues Asp-54 and 113–116 (EGAG). Asp-54 and Glu-113 together coordinate Mg(2+).

It belongs to the dethiobiotin synthetase family. In terms of assembly, homodimer. It depends on Mg(2+) as a cofactor.

The protein resides in the cytoplasm. It carries out the reaction (7R,8S)-7,8-diammoniononanoate + CO2 + ATP = (4R,5S)-dethiobiotin + ADP + phosphate + 3 H(+). It functions in the pathway cofactor biosynthesis; biotin biosynthesis; biotin from 7,8-diaminononanoate: step 1/2. Functionally, catalyzes a mechanistically unusual reaction, the ATP-dependent insertion of CO2 between the N7 and N8 nitrogen atoms of 7,8-diaminopelargonic acid (DAPA, also called 7,8-diammoniononanoate) to form a ureido ring. This is ATP-dependent dethiobiotin synthetase BioD from Anoxybacillus flavithermus (strain DSM 21510 / WK1).